Reading from the N-terminus, the 504-residue chain is Ribonuclease Y (504 aa).

A KH domain is found at 194–279 (TVHVVSLPND…EMVEKAKQEV (86 aa)). One can recognise an HD domain in the interval 320-413 (VLKHSMEVAY…VQAADAISAA (94 aa)).

This sequence belongs to the RNase Y family.

Endoribonuclease that initiates mRNA decay. The polypeptide is Ribonuclease Y (Clostridium novyi (strain NT)).